The primary structure comprises 133 residues: Phosphoribosyl-ATP pyrophosphatase (133 aa).

Residues 1–22 form a disordered region; the sequence is MGKPATKPAPKPSKQQDDKKSD.

Belongs to the PRA-PH family.

The protein resides in the cytoplasm. The catalysed reaction is 1-(5-phospho-beta-D-ribosyl)-ATP + H2O = 1-(5-phospho-beta-D-ribosyl)-5'-AMP + diphosphate + H(+). The protein operates within amino-acid biosynthesis; L-histidine biosynthesis; L-histidine from 5-phospho-alpha-D-ribose 1-diphosphate: step 2/9. The polypeptide is Phosphoribosyl-ATP pyrophosphatase (Gluconobacter oxydans (strain 621H) (Gluconobacter suboxydans)).